Reading from the N-terminus, the 415-residue chain is Polyadenylate-binding protein RBP45C (415 aa).

The tract at residues 1 to 77 (MMQQPPPASN…GGSQNPGSAG (77 aa)) is disordered. Low complexity predominate over residues 23–64 (QQAYLQQQQSWMMQHQQQQQGQPPAGWNQQSAPSSGQPQQQQ). 3 RRM domains span residues 80–160 (RSLW…WAQL), 173–252 (HTVF…PAAN), and 278–350 (TTIF…WGRS). Positions 344–356 (RLSWGRSPSNKQT) are enriched in polar residues. Positions 344–369 (RLSWGRSPSNKQTQPDQAQYGGGGGY) are disordered.

Belongs to the polyadenylate-binding RBP45 family. In terms of assembly, interacts with the poly(A) tail of mRNA in nucleus. As to expression, mostly expressed in seedlings and stems, and, to a lower extent, in leaves and flowers.

It localises to the nucleus. In terms of biological role, heterogeneous nuclear ribonucleoprotein (hnRNP)-protein binding the poly(A) tail of mRNA and probably involved in some steps of pre-mRNA maturation. This Arabidopsis thaliana (Mouse-ear cress) protein is Polyadenylate-binding protein RBP45C (RBP45C).